The chain runs to 852 residues: Probable nitrite reductase-hydroxylamine oxidoreductase fusion protein (852 aa).

Residues Met1–Ala27 form the signal peptide. A nitrite reductase domain region spans residues Asp28 to Pro327. 2 Plastocyanin-like domains span residues Val72–Pro169 and Gly217–Gly307. Positions 102 and 145 each coordinate Cu cation. The interval Gly328–Gly827 is hydroxylamine oxidoreductase domain. Heme-binding residues include Cys406, Cys409, His410, His426, Cys463, Cys466, His467, His471, Cys483, Cys486, His487, His505, His537, Cys543, Cys546, His547, His550, Cys563, Cys566, His567, Cys614, Cys617, His618, Cys686, Cys689, His690, and His813.

This sequence in the N-terminal section; belongs to the multicopper oxidase family. The cofactor is Cu cation. Heme is required as a cofactor.

Its subcellular location is the encapsulin nanocompartment. The enzyme catalyses hydroxylamine + 4 Fe(III)-[cytochrome c] + H2O = 4 Fe(II)-[cytochrome c] + nitrite + 5 H(+). It catalyses the reaction nitric oxide + Fe(III)-[cytochrome c] + H2O = Fe(II)-[cytochrome c] + nitrite + 2 H(+). Functionally, a nitrite reductase-hydroxylamine oxidoreductase protein that probably functions in the type 1 encapsulin nanocompartment. Probably involved in reductive catalysis. Targeted to the encapsulin nanocompartment by association with the diheme domain of the encapsulin shell protein (AC Q1Q6L7). Catalyzes the reduction of nitrite to nitric oxide (NO). Catalyzes the oxidation of hydroxylamine to nitrite. This is Probable nitrite reductase-hydroxylamine oxidoreductase fusion protein from Kuenenia stuttgartiensis.